A 359-amino-acid polypeptide reads, in one-letter code: MAP kinase-activated protein kinase 2 (359 aa).

Residues 20–281 (VTSNTVLGYG…IQDVISNKWI (262 aa)) form the Protein kinase domain. Residues 26 to 34 (LGYGINGKV) and lysine 49 contribute to the ATP site. Aspartate 142 serves as the catalytic Proton acceptor.

This sequence belongs to the protein kinase superfamily. CAMK Ser/Thr protein kinase family. In terms of processing, phosphorylated and activated by MAP kinase.

It catalyses the reaction L-seryl-[protein] + ATP = O-phospho-L-seryl-[protein] + ADP + H(+). The enzyme catalyses L-threonyl-[protein] + ATP = O-phospho-L-threonyl-[protein] + ADP + H(+). In terms of biological role, its physiological substrate seems to be the small heat shock protein (HSP27/HSP25). The polypeptide is MAP kinase-activated protein kinase 2 (MAPk-Ak2) (Drosophila melanogaster (Fruit fly)).